Here is a 142-residue protein sequence, read N- to C-terminus: VSLTDEEIRLIQHIWSNVNVVEITAKALERVFYVYPWTTRLFTSFNHNFKASDKQVHDHAVNVSNAISAAIGDLHDINKNFSALSTKHQKKLGVDTSNFMLLGQAFLVELAALEKDKFTPQYHKAALKLFEVVTEALSCQYH.

In terms of domain architecture, Globin spans 2 to 142; that stretch reads SLTDEEIRLI…VTEALSCQYH (141 aa). Heme b is bound by residues His59 and His88.

This sequence belongs to the globin family. Heterotetramer of two alpha chains and two beta chains. In terms of tissue distribution, red blood cells.

Involved in oxygen transport from the lung to the various peripheral tissues. This chain is Hemoglobin subunit beta-1 (HBB1), found in Torpedo marmorata (Marbled electric ray).